Reading from the N-terminus, the 187-residue chain is MGHETMTPATTTLVFTYGTLKRGFSNHVLMQDLIRSGDASFKGVYQTLDKYPLVCGPYRVPFLLNKPGSGYHVNGELYAVSPRGLSRLDELEGISRGHYIRQPIRLAAAEEEEEEEGDLETEAPSSCVVEAYYAHKSYEEELWRRNRGRSFGAYTENEARGYVKRNDRPQHLSFLDHIRIFVSSPCD.

Residue 17–20 (YGTL) coordinates substrate. E92 functions as the Proton acceptor in the catalytic mechanism.

This sequence belongs to the gamma-glutamylcyclotransferase family.

Putative gamma-glutamylcyclotransferase. This is Putative gamma-glutamylcyclotransferase At3g02910 from Arabidopsis thaliana (Mouse-ear cress).